The sequence spans 661 residues: MPYELISDYEPMGDQPQAIESLVNGLNKGYRFQTLLGVTGSGKTFTMANVIKEVNRPVLIISPNKTLAAQLYSEFKAFFPNNKVEFFISYYDYYQPEAYVPTKDLYIEKSADINDVIARMRMSAIKSIMTRRDVIVVASVSAIYACGDPRDFDTLNIKLEVGQRINLSEFVKKLVKIGYERKEDIGLTGSFRLRGDTLEIFPSYQDEGIRIELFGDEIDRMYTFDRMNRDVIERLDRLTIYPTKEYVTTEEKIERAVKSIRAELDEQVKKLRSEGKELEAQRLWQRTMNDIELLSTLGYCTGIENYSRHFDGRQPGEPPYSLLDYYDEDFIVFIDESHITIPQLRAMYHGEMSRKKSLVEYGFRLPCAYDNRPLKFDEFMQKVNQVIFVSATPGPYELEVSEQVVEQIIRPTGLIDPQVEVRPTRYQVDDLVNEIVQVKKRGEKALVTVLTKKTAEMLAEYLVEFNIRALYLHSELDAIKRVEVLKKLRAGEIDVVVGVNLLREGLDLPEVSLVAILDADTEGFLRSETTLIQIIGRTARNENGKVIMYADRITPAMQRAIDETNRRRKIQMEYNEKHGIKPKTIIKPLMEDIFAPFRDKEEEMYKVYEDSILQMKESLSLEEYAALLEEEMYKAASELRYEDAARLRDELFKIKEELNRN.

The region spanning N24–I209 is the Helicase ATP-binding domain. G37–T44 serves as a coordination point for ATP. The Beta-hairpin motif lies at Y90–I113. Positions D430–F594 constitute a Helicase C-terminal domain. A UVR domain is found at E622–E657.

It belongs to the UvrB family. In terms of assembly, forms a heterotetramer with UvrA during the search for lesions. Interacts with UvrC in an incision complex.

The protein localises to the cytoplasm. In terms of biological role, the UvrABC repair system catalyzes the recognition and processing of DNA lesions. A damage recognition complex composed of 2 UvrA and 2 UvrB subunits scans DNA for abnormalities. Upon binding of the UvrA(2)B(2) complex to a putative damaged site, the DNA wraps around one UvrB monomer. DNA wrap is dependent on ATP binding by UvrB and probably causes local melting of the DNA helix, facilitating insertion of UvrB beta-hairpin between the DNA strands. Then UvrB probes one DNA strand for the presence of a lesion. If a lesion is found the UvrA subunits dissociate and the UvrB-DNA preincision complex is formed. This complex is subsequently bound by UvrC and the second UvrB is released. If no lesion is found, the DNA wraps around the other UvrB subunit that will check the other stand for damage. The chain is UvrABC system protein B from Fervidobacterium nodosum (strain ATCC 35602 / DSM 5306 / Rt17-B1).